Consider the following 260-residue polypeptide: 14-3-3-like protein C (260 aa).

Belongs to the 14-3-3 family.

This chain is 14-3-3-like protein C, found in Nicotiana tabacum (Common tobacco).